We begin with the raw amino-acid sequence, 383 residues long: Ceramide synthase 3 (383 aa).

The helical transmembrane segment at 32 to 52 (VFVKPSHLYVTIPYAFLLLII) threads the bilayer. The interval 66–127 (KSFGIKETVR…RSRRNQERPS (62 aa)) is homeobox-like. In terms of domain architecture, TLC spans 130 to 331 (KKFQEACWRF…ILKMLNRCIF (202 aa)). A run of 5 helical transmembrane segments spans residues 139–159 (FAFY…KPWL), 174–194 (LLPS…SLLF), 205–225 (FLAH…SWCA), 264–284 (FFIF…FWIL), and 298–318 (FFSY…HLYW). The Cytoplasmic portion of the chain corresponds to 319-383 (GYYILKMLNR…HLIPNGQHGH (65 aa)). Position 340 is a phosphoserine (Ser-340). Acidic residues predominate over residues 342–355 (DEDYEEEEEEEEEE). The tract at residues 342-363 (DEDYEEEEEEEEEEATKGKEMD) is disordered.

As to expression, expressed in the epidermis, where it localizes at the interface between the stratum granulosum and the stratum corneum (at protein level).

Its subcellular location is the endoplasmic reticulum membrane. The enzyme catalyses a very long-chain fatty acyl-CoA + a sphingoid base = an N-(very-long-chain fatty acyl)-sphingoid base + CoA + H(+). It catalyses the reaction docosanoyl-CoA + sphinganine = N-docosanoylsphinganine + CoA + H(+). The catalysed reaction is tetracosanoyl-CoA + sphinganine = N-tetracosanoylsphinganine + CoA + H(+). It carries out the reaction hexacosanoyl-CoA + sphinganine = N-hexacosanoylsphinganine + CoA + H(+). The enzyme catalyses 2-hydroxydocosanoyl-CoA + sphinganine = N-(2-hydroxydocosanoyl)-sphinganine + CoA + H(+). It catalyses the reaction 2-hydroxytetracosanoyl-CoA + sphinganine = N-(2-hydroxytetracosanoyl)-sphinganine + CoA + H(+). The catalysed reaction is an ultra-long-chain fatty acyl-CoA + a sphingoid base = an N-(ultra-long-chain-acyl)-sphingoid base + CoA + H(+). It carries out the reaction octacosanoyl-CoA + sphinganine = N-(octacosanoyl)-sphinganine + CoA + H(+). The enzyme catalyses a fatty acyl-CoA + sphing-4-enine = an N-acylsphing-4-enine + CoA + H(+). It catalyses the reaction sphinganine + octadecanoyl-CoA = N-(octadecanoyl)-sphinganine + CoA + H(+). The catalysed reaction is 2-hydroxyoctadecanoyl-CoA + sphinganine = N-(2-hydroxyoctadecanoyl)-sphinganine + CoA + H(+). The protein operates within lipid metabolism; sphingolipid metabolism. Ceramide synthase that catalyzes the transfer of the acyl chain from acyl-CoA to a sphingoid base, with high selectivity toward very- and ultra-long-chain fatty acyl-CoA (chain length greater than C22). N-acylates sphinganine and sphingosine bases to form dihydroceramides and ceramides in de novo synthesis and salvage pathways, respectively. It is crucial for the synthesis of ultra-long-chain ceramides in the epidermis, to maintain epidermal lipid homeostasis and terminal differentiation. The sequence is that of Ceramide synthase 3 from Homo sapiens (Human).